Here is a 142-residue protein sequence, read N- to C-terminus: Large ribosomal subunit protein uL11 (142 aa).

The protein belongs to the universal ribosomal protein uL11 family. Part of the ribosomal stalk of the 50S ribosomal subunit. Interacts with L10 and the large rRNA to form the base of the stalk. L10 forms an elongated spine to which L12 dimers bind in a sequential fashion forming a multimeric L10(L12)X complex. Post-translationally, one or more lysine residues are methylated.

Forms part of the ribosomal stalk which helps the ribosome interact with GTP-bound translation factors. The chain is Large ribosomal subunit protein uL11 from Buchnera aphidicola subsp. Acyrthosiphon pisum (strain APS) (Acyrthosiphon pisum symbiotic bacterium).